A 213-amino-acid polypeptide reads, in one-letter code: Kynurenine formamidase (213 aa).

Position 18 (tryptophan 18) interacts with substrate. 3 residues coordinate Zn(2+): histidine 48, histidine 52, and aspartate 54. Histidine 58 functions as the Proton donor/acceptor in the catalytic mechanism. Residues histidine 160 and glutamate 172 each contribute to the Zn(2+) site.

This sequence belongs to the Cyclase 1 superfamily. KynB family. Homodimer. Zn(2+) serves as cofactor.

The catalysed reaction is N-formyl-L-kynurenine + H2O = L-kynurenine + formate + H(+). The protein operates within amino-acid degradation; L-tryptophan degradation via kynurenine pathway; L-kynurenine from L-tryptophan: step 2/2. In terms of biological role, catalyzes the hydrolysis of N-formyl-L-kynurenine to L-kynurenine, the second step in the kynurenine pathway of tryptophan degradation. The polypeptide is Kynurenine formamidase (Burkholderia cenocepacia (strain ATCC BAA-245 / DSM 16553 / LMG 16656 / NCTC 13227 / J2315 / CF5610) (Burkholderia cepacia (strain J2315))).